The chain runs to 538 residues: MIVEELKLLPSSKAAKDYLNNQNDMLSFFDYNIHQPTVFQQRLSDLQEQPYDRDALSKALLSYQKRFAFHDKAAQQVEKLKDPRSVVVIGGQQAGLLTGPLYTIYKAVTIVLLAREQERALGVPVVPVFWIAGEDHDLDEINAVPIEKNGRWRSHRIEEKRKRIASEAGLNKETLAKWLATVFRSLPETEHTLPLYERVKTLAGRSNTYTDFFAELLLYLFRDEGLVVFDSGDPSFRTLEKSCFHMLIQKTKNVQGAFAHQVKKLEQAGYGRPIITEETNAHLFYVEEGSRYRIDYTGENYELNGKNQTFSREELLEHLTLHPERFSNNVVTRPVMQDALFPVLAFVAGPGEISYWATLKRVFHECGMKMSPVVPRISATCVPSAVQKWFAEKQYSYEEAIAHGLEKEKEGWLEEQTPWPIDQVVEEAITQIRHSHKPIKDLAEQIGETPGKLANKNWSIIESQLRFMERRMKRHVRERFEHELSKFDEAERWLKPNGLLQERHDHVIQLLNIVGDDFIPRLISMNINKMGVHYLVKL.

It belongs to the BshC family.

Involved in bacillithiol (BSH) biosynthesis. May catalyze the last step of the pathway, the addition of cysteine to glucosamine malate (GlcN-Mal) to generate BSH. The protein is Putative cysteine ligase BshC of Halalkalibacterium halodurans (strain ATCC BAA-125 / DSM 18197 / FERM 7344 / JCM 9153 / C-125) (Bacillus halodurans).